The sequence spans 239 residues: MGNKIHPIGFRLGITRDWESRWYAGKKQYRHLLLEDQRIRGLLEKELYSAGLARVDIERAADNVAVTVHVAKPGVVIGRGGERIRVLREELAKLTGKNVALNVQEVQNPNLSAPLVAQRVAEQIERRFAVRRAIKQAVQRVMESGAKGAKVIVSGRIGGAEQARTEWAAQGRVPLHTLRANIDYGFALARTTYGVLGVKAYIFLGEVIGGQKPKARPELPKAEERPRRRRPAVRVKKEE.

The KH type-2 domain maps to 40-108 (RGLLEKELYS…VALNVQEVQN (69 aa)). Positions 212 to 239 (KPKARPELPKAEERPRRRRPAVRVKKEE) are disordered. Basic and acidic residues predominate over residues 215-226 (ARPELPKAEERP). Positions 227-239 (RRRRPAVRVKKEE) are enriched in basic residues.

It belongs to the universal ribosomal protein uS3 family. As to quaternary structure, part of the 30S ribosomal subunit. Forms a tight complex with proteins S10 and S14.

Binds the lower part of the 30S subunit head. Binds mRNA in the 70S ribosome, positioning it for translation. The chain is Small ribosomal subunit protein uS3 (rpsC) from Thermus thermophilus (strain ATCC BAA-163 / DSM 7039 / HB27).